Here is a 511-residue protein sequence, read N- to C-terminus: Cytochrome P450 26B1 (511 aa).

Position 440 (Cys440) interacts with heme.

This sequence belongs to the cytochrome P450 family. Heme serves as cofactor.

The protein resides in the endoplasmic reticulum membrane. It localises to the microsome membrane. It carries out the reaction all-trans-retinoate + reduced [NADPH--hemoprotein reductase] + O2 = all-trans-4-hydroxyretinoate + oxidized [NADPH--hemoprotein reductase] + H2O + H(+). The catalysed reaction is all-trans-retinoate + reduced [NADPH--hemoprotein reductase] + O2 = all-trans-18-hydroxyretinoate + oxidized [NADPH--hemoprotein reductase] + H2O + H(+). Its function is as follows. A cytochrome P450 monooxygenase involved in the metabolism of retinoates (RAs), the active metabolites of vitamin A, and critical signaling molecules in animals. RAs exist as at least four different isomers: all-trans-RA (atRA), 9-cis-RA, 13-cis-RA, and 9,13-dicis-RA, where atRA is considered to be the biologically active isomer, although 9-cis-RA and 13-cis-RA also have activity. Catalyzes the hydroxylation of atRA primarily at C-4 and C-18, thereby contributing to the regulation of atRA homeostasis and signaling. Hydroxylation of atRA limits its biological activity and initiates a degradative process leading to its eventual elimination. Involved in the convertion of atRA to all-trans-4-oxo-RA. Can oxidize all-trans-13,14-dihydroretinoate (DRA) to metabolites which could include all-trans-4-oxo-DRA, all-trans-4-hydroxy-DRA, all-trans-5,8-epoxy-DRA, and all-trans-18-hydroxy-DRA. Plays a role in skeletal development, both at the level of patterning and in the ossification of bone and the establishment of some synovial joints. In Danio rerio (Zebrafish), this protein is Cytochrome P450 26B1.